Here is a 601-residue protein sequence, read N- to C-terminus: Kelch repeat and BTB domain-containing protein 8 (601 aa).

Positions 48-116 constitute a BTB domain; that stretch reads TDIVVEVDHG…AYTSRVTLTE (69 aa). In terms of domain architecture, BACK spans 151 to 253; it reads CIGVFMFADA…LEEAFLSRIP (103 aa). Kelch repeat units lie at residues 336–390, 391–441, 443–481, 482–529, and 542–588; these read DIFI…HCCG, KLYA…EYKD, IYVLQGEYFFCFDPRKDYWGHLPSMNIPRTQGLAALHKN, CIYY…KVLL, and QVMV…FECV.

This sequence belongs to the KBTBD8 family. In terms of assembly, component of the BCR(KBTBD8) E3 ubiquitin ligase complex.

It localises to the cytoplasm. It is found in the cytoskeleton. The protein resides in the spindle. Its subcellular location is the golgi apparatus. Substrate-specific adapter of a BCR (BTB-CUL3-RBX1) E3 ubiquitin ligase complex that acts as a regulator of neural crest specification. The BCR(KBTBD8) complex acts by mediating monoubiquitination of target proteins. This is Kelch repeat and BTB domain-containing protein 8 (kbtbd8) from Danio rerio (Zebrafish).